We begin with the raw amino-acid sequence, 320 residues long: Acetyl-coenzyme A carboxylase carboxyl transferase subunit alpha (320 aa).

A CoA carboxyltransferase C-terminal domain is found at 42-295 (IGDKAAQALK…GDAIAEAFND (254 aa)).

This sequence belongs to the AccA family. Acetyl-CoA carboxylase is a heterohexamer composed of biotin carboxyl carrier protein (AccB), biotin carboxylase (AccC) and two subunits each of ACCase subunit alpha (AccA) and ACCase subunit beta (AccD).

Its subcellular location is the cytoplasm. The enzyme catalyses N(6)-carboxybiotinyl-L-lysyl-[protein] + acetyl-CoA = N(6)-biotinyl-L-lysyl-[protein] + malonyl-CoA. It functions in the pathway lipid metabolism; malonyl-CoA biosynthesis; malonyl-CoA from acetyl-CoA: step 1/1. Functionally, component of the acetyl coenzyme A carboxylase (ACC) complex. First, biotin carboxylase catalyzes the carboxylation of biotin on its carrier protein (BCCP) and then the CO(2) group is transferred by the carboxyltransferase to acetyl-CoA to form malonyl-CoA. The protein is Acetyl-coenzyme A carboxylase carboxyl transferase subunit alpha of Nitrobacter hamburgensis (strain DSM 10229 / NCIMB 13809 / X14).